A 659-amino-acid chain; its full sequence is Fructose-1,6-bisphosphatase class 3 (659 aa).

Belongs to the FBPase class 3 family. Requires Mn(2+) as cofactor.

It carries out the reaction beta-D-fructose 1,6-bisphosphate + H2O = beta-D-fructose 6-phosphate + phosphate. The protein operates within carbohydrate biosynthesis; gluconeogenesis. In Clostridium botulinum (strain Alaska E43 / Type E3), this protein is Fructose-1,6-bisphosphatase class 3.